Consider the following 108-residue polypeptide: Phosphoribosyl-AMP cyclohydrolase (108 aa).

Aspartate 73 is a binding site for Mg(2+). Cysteine 74 is a binding site for Zn(2+). Residues aspartate 75 and aspartate 77 each contribute to the Mg(2+) site. Positions 90 and 97 each coordinate Zn(2+).

This sequence belongs to the PRA-CH family. As to quaternary structure, homodimer. The cofactor is Mg(2+). Zn(2+) is required as a cofactor.

The protein resides in the cytoplasm. The catalysed reaction is 1-(5-phospho-beta-D-ribosyl)-5'-AMP + H2O = 1-(5-phospho-beta-D-ribosyl)-5-[(5-phospho-beta-D-ribosylamino)methylideneamino]imidazole-4-carboxamide. Its pathway is amino-acid biosynthesis; L-histidine biosynthesis; L-histidine from 5-phospho-alpha-D-ribose 1-diphosphate: step 3/9. Functionally, catalyzes the hydrolysis of the adenine ring of phosphoribosyl-AMP. The polypeptide is Phosphoribosyl-AMP cyclohydrolase (Lactiplantibacillus plantarum (strain ATCC BAA-793 / NCIMB 8826 / WCFS1) (Lactobacillus plantarum)).